Here is a 263-residue protein sequence, read N- to C-terminus: Putative replication protein PDa0002 (263 aa).

In Xylella fastidiosa (strain Temecula1 / ATCC 700964), this protein is Putative replication protein PDa0002.